Consider the following 654-residue polypeptide: Acetyl-coenzyme A synthetase (654 aa).

Residues 191–194 and Thr-315 contribute to the CoA site; that span reads RRGQ. ATP is bound by residues 391–393, 415–420, Asp-506, and Arg-521; these read GEP and DTWWQT. A CoA-binding site is contributed by Ser-529. ATP is bound at residue Arg-532. Positions 543, 545, and 548 each coordinate Mg(2+). Lys-615 bears the N6-acetyllysine mark.

This sequence belongs to the ATP-dependent AMP-binding enzyme family. Mg(2+) is required as a cofactor. Post-translationally, acetylated. Deacetylation by the SIR2-homolog deacetylase activates the enzyme.

It carries out the reaction acetate + ATP + CoA = acetyl-CoA + AMP + diphosphate. Functionally, catalyzes the conversion of acetate into acetyl-CoA (AcCoA), an essential intermediate at the junction of anabolic and catabolic pathways. AcsA undergoes a two-step reaction. In the first half reaction, AcsA combines acetate with ATP to form acetyl-adenylate (AcAMP) intermediate. In the second half reaction, it can then transfer the acetyl group from AcAMP to the sulfhydryl group of CoA, forming the product AcCoA. The polypeptide is Acetyl-coenzyme A synthetase (Gemmatimonas aurantiaca (strain DSM 14586 / JCM 11422 / NBRC 100505 / T-27)).